The following is a 345-amino-acid chain: Acetylserotonin O-methyltransferase (345 aa).

Residues tyrosine 147, tryptophan 164, aspartate 210, 235–237, and arginine 252 contribute to the S-adenosyl-L-methionine site; that span reads GDF. Histidine 255 functions as the Proton donor/acceptor in the catalytic mechanism. 3 residues coordinate substrate: aspartate 256, asparagine 302, and glutamine 306.

The protein belongs to the class I-like SAM-binding methyltransferase superfamily. Cation-independent O-methyltransferase family. In terms of assembly, homodimer. As to expression, highly expressed in pineal gland. In the retina, 10- to 100-fold lower expression compared to pineal gland, if any.

It catalyses the reaction N-acetylserotonin + S-adenosyl-L-methionine = melatonin + S-adenosyl-L-homocysteine + H(+). Its pathway is aromatic compound metabolism; melatonin biosynthesis; melatonin from serotonin: step 1/2. In terms of biological role, catalyzes the transfer of a methyl group onto N-acetylserotonin, producing melatonin (N-acetyl-5-methoxytryptamine). The sequence is that of Acetylserotonin O-methyltransferase (ASMT) from Macaca mulatta (Rhesus macaque).